The chain runs to 437 residues: MRASVVLTCYCWLLVRVSSIHPECRFHLEIQEEETKCAELLSSQMENHRACSGVWDNITCWRPADIGETVTVPCPKVFSNFYSRPGNISKNCTSDGWSETFPDFIDACGYNDPEDESKITFYILVKAIYTLGYSVSLMSLTTGSIIICLFRKLHCTRNYIHLNLFLSFMLRAISVLVKDSVLYSSSGTLRCHDQPGSWVGCKLSLVFFQYCIMANFYWLLVEGLYLHTLLVAILPPSRCFLAYLLIGWGIPSVCIGAWIATRLSLEDTGCWDTNDHSIPWWVIRMPILISIVVNFALFISIVRILLQKLTSPDVGGNDQSQYKRLAKSTLLLIPLFGVHYMVFAAFPIGISSTYQILFELCVGSFQGLVVAVLYCFLNSEVQCELKRRWRGLCLTQPGSRDYRLHSWSMSRNGSESALQIHRGSRTQSFLQSETSVI.

An N-terminal signal peptide occupies residues 1 to 22; that stretch reads MRASVVLTCYCWLLVRVSSIHP. Residues 23–123 lie on the Extracellular side of the membrane; the sequence is ECRFHLEIQE…EDESKITFYI (101 aa). Disulfide bonds link Cys-37-Cys-60, Cys-51-Cys-92, and Cys-74-Cys-108. Residues Asn-57, Asn-87, and Asn-91 are each glycosylated (N-linked (GlcNAc...) asparagine). A helical membrane pass occupies residues 124–149; sequence LVKAIYTLGYSVSLMSLTTGSIIICL. Residues 150 to 157 are Cytoplasmic-facing; it reads FRKLHCTR. A helical membrane pass occupies residues 158–179; that stretch reads NYIHLNLFLSFMLRAISVLVKD. Topologically, residues 180–202 are extracellular; it reads SVLYSSSGTLRCHDQPGSWVGCK. A disulfide bridge links Cys-201 with Cys-270. The chain crosses the membrane as a helical span at residues 203–227; sequence LSLVFFQYCIMANFYWLLVEGLYLH. The Cytoplasmic segment spans residues 228–238; that stretch reads TLLVAILPPSR. A helical transmembrane segment spans residues 239 to 260; it reads CFLAYLLIGWGIPSVCIGAWIA. Residues 261–279 lie on the Extracellular side of the membrane; sequence TRLSLEDTGCWDTNDHSIP. A helical transmembrane segment spans residues 280–303; sequence WWVIRMPILISIVVNFALFISIVR. Topologically, residues 304 to 324 are cytoplasmic; that stretch reads ILLQKLTSPDVGGNDQSQYKR. Residues 325 to 345 traverse the membrane as a helical segment; that stretch reads LAKSTLLLIPLFGVHYMVFAA. Topologically, residues 346 to 353 are extracellular; that stretch reads FPIGISST. Residues 354–377 traverse the membrane as a helical segment; it reads YQILFELCVGSFQGLVVAVLYCFL. Over 378–437 the chain is Cytoplasmic; sequence NSEVQCELKRRWRGLCLTQPGSRDYRLHSWSMSRNGSESALQIHRGSRTQSFLQSETSVI.

Belongs to the G-protein coupled receptor 2 family. As to quaternary structure, interacts with ADCYAP1/PACAP (via N-terminal extracellular domain); activated by PACAP27 and CAPAC38 neuropeptides. Interacts with VIP; the interaction results in VIPR1 activation. In terms of tissue distribution, mainly in the thalamus, hippocampus and in the suprachiasmatic nucleus.

The protein resides in the cell membrane. Its function is as follows. G protein-coupled receptor activated by the neuropeptides vasoactive intestinal peptide (VIP) and pituitary adenylate cyclase-activating polypeptide (ADCYAP1/PACAP). Binds VIP and both PACAP27 and PACAP38 bioactive peptides with the order of ligand affinity of VIP = PACAP38 &gt; PACAP27. Ligand binding causes a conformation change that triggers signaling via guanine nucleotide-binding proteins (G proteins) and modulates the activity of downstream effectors. Activates cAMP-dependent pathway. May be coupled to phospholipase C. The polypeptide is Vasoactive intestinal polypeptide receptor 2 (Rattus norvegicus (Rat)).